The sequence spans 377 residues: ATP-dependent (S)-NAD(P)H-hydrate dehydratase (377 aa).

Residues 10-366 (LLHLSRQLIQ…EYLHESFTEL (357 aa)) enclose the YjeF C-terminal domain. (6S)-NADPHX is bound by residues glycine 148 and 201–207 (NVVEFQR). ATP-binding positions include 245-249 (KGEHD) and 264-273 (GSNKRVGGQG). Position 274 (aspartate 274) interacts with (6S)-NADPHX.

It belongs to the NnrD/CARKD family. Mg(2+) serves as cofactor.

Its subcellular location is the cytoplasm. The enzyme catalyses (6S)-NADHX + ATP = ADP + phosphate + NADH + H(+). It catalyses the reaction (6S)-NADPHX + ATP = ADP + phosphate + NADPH + H(+). Functionally, catalyzes the dehydration of the S-form of NAD(P)HX at the expense of ATP, which is converted to ADP. Together with NAD(P)HX epimerase, which catalyzes the epimerization of the S- and R-forms, the enzyme allows the repair of both epimers of NAD(P)HX, a damaged form of NAD(P)H that is a result of enzymatic or heat-dependent hydration. The chain is ATP-dependent (S)-NAD(P)H-hydrate dehydratase from Candida albicans (strain SC5314 / ATCC MYA-2876) (Yeast).